Here is a 639-residue protein sequence, read N- to C-terminus: Altered inheritance of mitochondria protein 9, mitochondrial (639 aa).

A mitochondrion-targeting transit peptide spans 1 to 45 (MLMSKAPKLGNLLSKNSIKIVSGSKLRCNLKYINVRYISDTPDKV). The tract at residues 619–639 (VSSEAQSEVQSEVQSSTENKD) is disordered.

This sequence belongs to the AIM9 family.

The protein resides in the mitochondrion. In Vanderwaltozyma polyspora (strain ATCC 22028 / DSM 70294 / BCRC 21397 / CBS 2163 / NBRC 10782 / NRRL Y-8283 / UCD 57-17) (Kluyveromyces polysporus), this protein is Altered inheritance of mitochondria protein 9, mitochondrial (AIM9).